A 307-amino-acid chain; its full sequence is Protoheme IX farnesyltransferase (307 aa).

Transmembrane regions (helical) follow at residues 28-48, 50-70, 100-120, 122-142, 149-169, 176-196, 218-238, 243-263, and 282-302; these read VTQL…PGMV, WPVL…AFAI, ILLF…VFAN, LTMW…TLLL, NIVI…AAVA, AWIL…ALAL, FTLL…ILPF, SGYL…VHAW, and IVYL…KFGP.

The protein belongs to the UbiA prenyltransferase family. Protoheme IX farnesyltransferase subfamily.

It is found in the cell inner membrane. The enzyme catalyses heme b + (2E,6E)-farnesyl diphosphate + H2O = Fe(II)-heme o + diphosphate. It participates in porphyrin-containing compound metabolism; heme O biosynthesis; heme O from protoheme: step 1/1. Converts heme B (protoheme IX) to heme O by substitution of the vinyl group on carbon 2 of heme B porphyrin ring with a hydroxyethyl farnesyl side group. This chain is Protoheme IX farnesyltransferase, found in Ralstonia nicotianae (strain ATCC BAA-1114 / GMI1000) (Ralstonia solanacearum).